A 788-amino-acid polypeptide reads, in one-letter code: Glycerol-3-phosphate acyltransferase (788 aa).

Residues 104–135 form a disordered region; it reads LLPGRDPYHPNPRQQRRILRSDPQRARVMAGE. An HXXXXD motif motif is present at residues 271 to 276; sequence SHRSYI.

The protein belongs to the GPAT/DAPAT family.

It localises to the cell membrane. It catalyses the reaction sn-glycerol 3-phosphate + an acyl-CoA = a 1-acyl-sn-glycero-3-phosphate + CoA. The protein operates within phospholipid metabolism; CDP-diacylglycerol biosynthesis; CDP-diacylglycerol from sn-glycerol 3-phosphate: step 1/3. This Mycobacterium marinum (strain ATCC BAA-535 / M) protein is Glycerol-3-phosphate acyltransferase.